A 382-amino-acid polypeptide reads, in one-letter code: Histidinol-phosphate aminotransferase (382 aa).

Lys215 is subject to N6-(pyridoxal phosphate)lysine. The interval 363–382 is disordered; the sequence is NIDNQSKTHSQTSSIRKGTI.

Belongs to the class-II pyridoxal-phosphate-dependent aminotransferase family. Histidinol-phosphate aminotransferase subfamily. Homodimer. It depends on pyridoxal 5'-phosphate as a cofactor.

The enzyme catalyses L-histidinol phosphate + 2-oxoglutarate = 3-(imidazol-4-yl)-2-oxopropyl phosphate + L-glutamate. It functions in the pathway amino-acid biosynthesis; L-histidine biosynthesis; L-histidine from 5-phospho-alpha-D-ribose 1-diphosphate: step 7/9. The polypeptide is Histidinol-phosphate aminotransferase (Yersinia pseudotuberculosis serotype O:1b (strain IP 31758)).